The primary structure comprises 347 residues: Protein RecA (347 aa).

65–72 serves as a coordination point for ATP; it reads GPESSGKT. The segment at 328–347 is disordered; sequence SPAQPEAPAAGEKPEQEEEF.

The protein belongs to the RecA family.

It is found in the cytoplasm. Its function is as follows. Can catalyze the hydrolysis of ATP in the presence of single-stranded DNA, the ATP-dependent uptake of single-stranded DNA by duplex DNA, and the ATP-dependent hybridization of homologous single-stranded DNAs. It interacts with LexA causing its activation and leading to its autocatalytic cleavage. This chain is Protein RecA, found in Vibrio parahaemolyticus serotype O3:K6 (strain RIMD 2210633).